Here is a 344-residue protein sequence, read N- to C-terminus: Dihydroorotase (344 aa).

Zn(2+) is bound by residues His13 and His15. Substrate is bound by residues 15–17 (HLR) and Asn41. Zn(2+) contacts are provided by Lys99, His136, and His174. N6-carboxylysine is present on Lys99. Position 136 (His136) interacts with substrate. Leu219 lines the substrate pocket. Asp247 serves as a coordination point for Zn(2+). Asp247 is a catalytic residue. His251 and Ala263 together coordinate substrate.

It belongs to the metallo-dependent hydrolases superfamily. DHOase family. Class II DHOase subfamily. Homodimer. The cofactor is Zn(2+).

The enzyme catalyses (S)-dihydroorotate + H2O = N-carbamoyl-L-aspartate + H(+). It participates in pyrimidine metabolism; UMP biosynthesis via de novo pathway; (S)-dihydroorotate from bicarbonate: step 3/3. Its function is as follows. Catalyzes the reversible cyclization of carbamoyl aspartate to dihydroorotate. The chain is Dihydroorotase from Microcystis aeruginosa (strain NIES-843 / IAM M-2473).